We begin with the raw amino-acid sequence, 279 residues long: Pantothenate synthetase (279 aa).

Residue 26 to 33 (MGNLHEGH) coordinates ATP. His33 (proton donor) is an active-site residue. Gln57 serves as a coordination point for (R)-pantoate. Residue Gln57 coordinates beta-alanine. 144–147 (GKKD) provides a ligand contact to ATP. Gln150 is a (R)-pantoate binding site. ATP is bound by residues Val173 and 181 to 184 (LSSR).

The protein belongs to the pantothenate synthetase family. In terms of assembly, homodimer.

Its subcellular location is the cytoplasm. It carries out the reaction (R)-pantoate + beta-alanine + ATP = (R)-pantothenate + AMP + diphosphate + H(+). The protein operates within cofactor biosynthesis; (R)-pantothenate biosynthesis; (R)-pantothenate from (R)-pantoate and beta-alanine: step 1/1. Catalyzes the condensation of pantoate with beta-alanine in an ATP-dependent reaction via a pantoyl-adenylate intermediate. This is Pantothenate synthetase from Burkholderia cenocepacia (strain ATCC BAA-245 / DSM 16553 / LMG 16656 / NCTC 13227 / J2315 / CF5610) (Burkholderia cepacia (strain J2315)).